Consider the following 189-residue polypeptide: Chitin synthase 1 (189 aa).

This sequence belongs to the chitin synthase family.

It is found in the cell membrane. It carries out the reaction [(1-&gt;4)-N-acetyl-beta-D-glucosaminyl](n) + UDP-N-acetyl-alpha-D-glucosamine = [(1-&gt;4)-N-acetyl-beta-D-glucosaminyl](n+1) + UDP + H(+). Polymerizes chitin, a structural polymer of the cell wall and septum, by transferring the sugar moiety of UDP-GlcNAc to the non-reducing end of the growing chitin polymer. The chain is Chitin synthase 1 (CHS1) from Xylohypha bantiana.